The following is a 357-amino-acid chain: Beta-hexosaminidase (357 aa).

Substrate is bound by residues Asp-66, Arg-74, Arg-140, and 170–171 (KH). His-183 functions as the Proton donor/acceptor in the catalytic mechanism. The active-site Nucleophile is the Asp-254.

Belongs to the glycosyl hydrolase 3 family. NagZ subfamily.

The protein localises to the cytoplasm. It catalyses the reaction Hydrolysis of terminal non-reducing N-acetyl-D-hexosamine residues in N-acetyl-beta-D-hexosaminides.. The protein operates within cell wall biogenesis; peptidoglycan recycling. Functionally, plays a role in peptidoglycan recycling by cleaving the terminal beta-1,4-linked N-acetylglucosamine (GlcNAc) from peptide-linked peptidoglycan fragments, giving rise to free GlcNAc, anhydro-N-acetylmuramic acid and anhydro-N-acetylmuramic acid-linked peptides. This chain is Beta-hexosaminidase, found in Chromobacterium violaceum (strain ATCC 12472 / DSM 30191 / JCM 1249 / CCUG 213 / NBRC 12614 / NCIMB 9131 / NCTC 9757 / MK).